A 157-amino-acid polypeptide reads, in one-letter code: uncharacterized protein (157 aa).

The N-acetyltransferase domain occupies 9–147 (LLINYKTLDE…DFYVWHPEVN (139 aa)).

This is an uncharacterized protein from Bacillus cereus (strain 03BB102).